Here is a 614-residue protein sequence, read N- to C-terminus: Threonine--tRNA ligase (614 aa).

Residues methionine 1–isoleucine 138 are editing domain. Residues glutamate 133–serine 157 are disordered. Positions glutamate 141–serine 154 are enriched in acidic residues. The segment at proline 200–proline 495 is catalytic. 3 residues coordinate Zn(2+): cysteine 292, histidine 344, and histidine 466.

The protein belongs to the class-II aminoacyl-tRNA synthetase family. In terms of assembly, homodimer. Zn(2+) serves as cofactor.

The protein localises to the cytoplasm. It carries out the reaction tRNA(Thr) + L-threonine + ATP = L-threonyl-tRNA(Thr) + AMP + diphosphate + H(+). Catalyzes the attachment of threonine to tRNA(Thr) in a two-step reaction: L-threonine is first activated by ATP to form Thr-AMP and then transferred to the acceptor end of tRNA(Thr). Also edits incorrectly charged L-seryl-tRNA(Thr). The chain is Threonine--tRNA ligase from Methanosphaera stadtmanae (strain ATCC 43021 / DSM 3091 / JCM 11832 / MCB-3).